Reading from the N-terminus, the 1029-residue chain is Kinesin-like protein KIF17 (1029 aa).

One can recognise a Kinesin motor domain in the interval 5–335 (AVKVVVRCRP…LRYANRAKNI (331 aa)). 91-98 (GQTGSGKS) lines the ATP pocket. A coiled-coil region spans residues 346–462 (KDALLREYQE…EENLRKETEA (117 aa)). Disordered regions lie at residues 523 to 569 (ELPK…MPTE) and 647 to 673 (VPAPTDLLEPSDARPEAEAADDFPPRP). Residues 532-551 (SEISLGSSESSSLEETSVSE) show a composition bias toward low complexity. Residues 657–673 (SDARPEAEAADDFPPRP) show a composition bias toward basic and acidic residues. Residues 739–846 (QQVLARLQLL…QLEKIDYLAT (108 aa)) are a coiled coil. 2 disordered regions span residues 908–931 (AVSTGPQNKPARKTSAADNGEPNM) and 968–1029 (KSLT…SEPL).

Belongs to the TRAFAC class myosin-kinesin ATPase superfamily. Kinesin family. Homodimer. Interacts with APBA1 (via PDZ domain); the interaction is direct and is required for association of KIF17 with the cargo that is to be transported. Interacts with IFT B complex components IFT52 and IFT57. Interacts with IFT70B. Interacts with PIWIL1. Interacts with TBATA.

Its subcellular location is the cytoplasm. The protein resides in the cytoskeleton. It is found in the cell projection. The protein localises to the cilium. It localises to the dendrite. Functionally, dendrite-specific motor protein which, in association with the Apba1-containing complex (LIN-10-LIN-2-LIN-7 complex), transports vesicles containing N-methyl-D-aspartate (NMDA) receptor subunit NR2B along microtubules. The polypeptide is Kinesin-like protein KIF17 (KIF17) (Homo sapiens (Human)).